The chain runs to 277 residues: UPF0276 protein PP_2398 (277 aa).

It belongs to the UPF0276 family.

The chain is UPF0276 protein PP_2398 from Pseudomonas putida (strain ATCC 47054 / DSM 6125 / CFBP 8728 / NCIMB 11950 / KT2440).